The sequence spans 65 residues: uncharacterized protein (65 aa).

This sequence to E.coli YjiX.

This is an uncharacterized protein from Escherichia coli O6:H1 (strain CFT073 / ATCC 700928 / UPEC).